A 573-amino-acid polypeptide reads, in one-letter code: Poly(ribitol-phosphate) beta-N-acetylglucosaminyltransferase TarS (573 aa).

UDP-N-acetyl-alpha-D-glucosamine is bound by residues Pro-9, Asp-41, Asn-68, Arg-76, Asp-92–Asp-94, Arg-127, and Glu-178. Residue Asp-94 coordinates Mn(2+). Catalysis depends on Asp-179, which acts as the Proton acceptor. Residues Arg-207 and His-211–Ser-213 each bind UDP-N-acetyl-alpha-D-glucosamine.

This sequence belongs to the glycosyltransferase 2 family. As to quaternary structure, homotrimer. The cofactor is Mn(2+).

The catalysed reaction is 4-O-[(D-ribitylphospho)(n)-di{(2R)-glycerylphospho}]-N-acetyl-beta-D-mannosaminyl-(1-&gt;4)-N-acetyl-alpha-D-glucosaminyl di-trans,octa-cis-undecaprenyl diphosphate + n UDP-N-acetyl-alpha-D-glucosamine = 4-O-([2-N-acetyl-beta-D-glucosaminyl-1-D-ribitylphospho](n)-di{[2R]-1-glycerylphospho})-N-acetyl-beta-D-mannosaminyl-(1-&gt;4)-N-acetyl-alpha-D-glucosaminyl di-trans,octa-cis-undecaprenyl diphosphate + n UDP + n H(+). Its pathway is cell wall biogenesis; poly(ribitol phosphate) teichoic acid biosynthesis. Its function is as follows. Attaches beta-O-GlcNAc (beta-O-N-acetyl-D-glucosamine) residues to the C4 position of poly(RboP)-wall teichoic acids (WTAs). Mediates beta-lactam resistance in methicillin resistant Staphylococcus aureus (MRSA) strains. This is Poly(ribitol-phosphate) beta-N-acetylglucosaminyltransferase TarS from Staphylococcus aureus (strain Mu50 / ATCC 700699).